Reading from the N-terminus, the 295-residue chain is Acetylglutamate kinase (295 aa).

Substrate-binding positions include 66-67 (GG), arginine 88, and asparagine 193.

This sequence belongs to the acetylglutamate kinase family. ArgB subfamily.

The protein resides in the cytoplasm. The catalysed reaction is N-acetyl-L-glutamate + ATP = N-acetyl-L-glutamyl 5-phosphate + ADP. The protein operates within amino-acid biosynthesis; L-arginine biosynthesis; N(2)-acetyl-L-ornithine from L-glutamate: step 2/4. Its function is as follows. Catalyzes the ATP-dependent phosphorylation of N-acetyl-L-glutamate. The sequence is that of Acetylglutamate kinase from Sinorhizobium medicae (strain WSM419) (Ensifer medicae).